A 600-amino-acid chain; its full sequence is Aspartate--tRNA(Asp/Asn) ligase (600 aa).

Glutamate 174 contributes to the L-aspartate binding site. The interval 198–201 (QLFK) is aspartate. Residue arginine 220 coordinates L-aspartate. ATP contacts are provided by residues 220–222 (RDE) and glutamine 229. Histidine 457 lines the L-aspartate pocket. Glutamate 491 contacts ATP. Arginine 498 contributes to the L-aspartate binding site. 543–546 (GLDR) contacts ATP.

It belongs to the class-II aminoacyl-tRNA synthetase family. Type 1 subfamily. In terms of assembly, homodimer.

Its subcellular location is the cytoplasm. The catalysed reaction is tRNA(Asx) + L-aspartate + ATP = L-aspartyl-tRNA(Asx) + AMP + diphosphate. Aspartyl-tRNA synthetase with relaxed tRNA specificity since it is able to aspartylate not only its cognate tRNA(Asp) but also tRNA(Asn). Reaction proceeds in two steps: L-aspartate is first activated by ATP to form Asp-AMP and then transferred to the acceptor end of tRNA(Asp/Asn). In Burkholderia ambifaria (strain ATCC BAA-244 / DSM 16087 / CCUG 44356 / LMG 19182 / AMMD) (Burkholderia cepacia (strain AMMD)), this protein is Aspartate--tRNA(Asp/Asn) ligase.